Consider the following 1066-residue polypeptide: Zinc finger and BTB domain-containing protein 21 (1066 aa).

The region spanning Cys30–Lys96 is the BTB domain. Residues Cys30–Lys96 are mediates homodimerization. Lys40 participates in a covalent cross-link: Glycyl lysine isopeptide (Lys-Gly) (interchain with G-Cter in SUMO1); alternate. Residue Lys40 forms a Glycyl lysine isopeptide (Lys-Gly) (interchain with G-Cter in SUMO2); alternate linkage. Residues Ser154 to Ser177 are compositionally biased toward polar residues. The segment at Ser154–Glu196 is disordered. Residues Lys255, Lys266, Lys273, Lys312, and Lys337 each participate in a glycyl lysine isopeptide (Lys-Gly) (interchain with G-Cter in SUMO2) cross-link. Ser345 and Ser381 each carry phosphoserine. Residue Lys383 forms a Glycyl lysine isopeptide (Lys-Gly) (interchain with G-Cter in SUMO2) linkage. Over residues Asp388–Pro399 the composition is skewed to basic and acidic residues. Disordered regions lie at residues Asp388–Asp442, Thr454–Arg485, and Lys498–Pro525. Phosphoserine is present on residues Ser411 and Ser422. Lys430 is covalently cross-linked (Glycyl lysine isopeptide (Lys-Gly) (interchain with G-Cter in SUMO2)). Thr431 carries the post-translational modification Phosphothreonine. Phosphoserine occurs at positions 434, 435, and 438. The segment covering Leu466–Ser478 has biased composition (basic and acidic residues). Glycyl lysine isopeptide (Lys-Gly) (interchain with G-Cter in SUMO2) cross-links involve residues Lys469 and Lys475. 2 consecutive C2H2-type zinc fingers follow at residues Phe546–His569 and Tyr575–His598. At Ser605 the chain carries Phosphoserine. Residues Lys617, Lys643, and Lys659 each participate in a glycyl lysine isopeptide (Lys-Gly) (interchain with G-Cter in SUMO2) cross-link. The C2H2-type 3 zinc finger occupies Tyr670–His692. Lys702 participates in a covalent cross-link: Glycyl lysine isopeptide (Lys-Gly) (interchain with G-Cter in SUMO2). Ser714 carries the phosphoserine modification. A C2H2-type 4; atypical zinc finger spans residues Ala748–Cys770. Glycyl lysine isopeptide (Lys-Gly) (interchain with G-Cter in SUMO2) cross-links involve residues Lys763 and Lys785. A C2H2-type 5 zinc finger spans residues Leu775–His798. Positions Thr806 to Thr840 are disordered. The segment covering Val820–Glu831 has biased composition (polar residues). Lys875 participates in a covalent cross-link: Glycyl lysine isopeptide (Lys-Gly) (interchain with G-Cter in SUMO2). Lys879 participates in a covalent cross-link: Glycyl lysine isopeptide (Lys-Gly) (interchain with G-Cter in SUMO1); alternate. Lys879 participates in a covalent cross-link: Glycyl lysine isopeptide (Lys-Gly) (interchain with G-Cter in SUMO2); alternate. The disordered stretch occupies residues Lys879–Ala906. The span at Pro882 to Pro891 shows a compositional bias: acidic residues. A C2H2-type 6; atypical zinc finger spans residues Trp909 to Cys932. Residue Lys935 forms a Glycyl lysine isopeptide (Lys-Gly) (interchain with G-Cter in SUMO2) linkage. Residues Phe937 to His959 form a C2H2-type 7 zinc finger. Residues Ala963–Ala1014 form a disordered region. Positions Thr979 to Lys995 are enriched in pro residues. At Ser1003 the chain carries Phosphoserine. The segment at Phe1043–His1065 adopts a C2H2-type 8 zinc-finger fold.

In terms of assembly, homodimer. Interacts with ZBTB14. In terms of tissue distribution, ubiquitous in fetal and adult tissues.

The protein localises to the nucleus. Functionally, acts as a transcription repressor. The polypeptide is Zinc finger and BTB domain-containing protein 21 (ZBTB21) (Homo sapiens (Human)).